Here is a 270-residue protein sequence, read N- to C-terminus: 3-phenylpropionate-dihydrodiol/cinnamic acid-dihydrodiol dehydrogenase (270 aa).

An NAD(+)-binding site is contributed by 10–34; sequence FITGGGSGLGLALVERFIEKGAQVA. Position 143 (S143) interacts with substrate. Residue Y156 is the Proton acceptor of the active site.

Belongs to the short-chain dehydrogenases/reductases (SDR) family.

It catalyses the reaction 3-(cis-5,6-dihydroxycyclohexa-1,3-dien-1-yl)propanoate + NAD(+) = 3-(2,3-dihydroxyphenyl)propanoate + NADH + H(+). It carries out the reaction (2E)-3-(cis-5,6-dihydroxycyclohexa-1,3-dien-1-yl)prop-2-enoate + NAD(+) = (2E)-3-(2,3-dihydroxyphenyl)prop-2-enoate + NADH + H(+). It participates in aromatic compound metabolism; 3-phenylpropanoate degradation. Converts 3-phenylpropionate-dihydrodiol (PP-dihydrodiol) and cinnamic acid-dihydrodiol (CI-dihydrodiol) into 3-(2,3-dihydroxylphenyl)propanoic acid (DHPP) and 2,3-dihydroxicinnamic acid (DHCI), respectively. In Escherichia coli, this protein is 3-phenylpropionate-dihydrodiol/cinnamic acid-dihydrodiol dehydrogenase (hcaB).